Consider the following 1324-residue polypeptide: Actin cytoskeleton-regulatory complex protein PAN1 (1324 aa).

Low complexity-rich tracts occupy residues 1 to 26 and 35 to 54; these read MYNQYQQQPQQPQQFGGQQQFNAQPQ and QQQVPTQGQQQQFSGFQTFS. The tract at residues 1-98 is disordered; the sequence is MYNQYQQQPQ…GMQQPFGNQQ (98 aa). Over residues 55–67 the composition is skewed to polar residues; it reads NAGALNQQPTGFS. Low complexity predominate over residues 68–98; sequence QQTQAQPQQPQQQQPQSQPQQGMQQPFGNQQ. The EH 1 domain occupies 199–288; that stretch reads DQAKFEKLFR…SRTKAEVSSF (90 aa). The EF-hand 1 domain maps to 232–267; sequence LQPHQLAKIWTLSDTNKAGVLLFPEFALAMYLVNSV. The segment at 299 to 427 is disordered; it reads DSEVEQKPKT…SMPQTSFTQQ (129 aa). Residues 330-364 are compositionally biased toward low complexity; the sequence is QLSFGSQPQQMQQQQQQQQQQPQQQSFQGLTQQPT. A compositionally biased stretch (polar residues) spans 371–411; it reads PQTSFGNTSQALQPQSTGFMPQNSFNQPLNAQTTGGFSSVL. An EH 2 domain is found at 494–583; it reads EKSLFYKIFE…PSLIPSSTKI (90 aa). The EF-hand 2 domain occupies 527-562; the sequence is LNRSDLEHIWNLCDTNNSGNLNKQEFALGMHLVYRR. Aspartate 540, asparagine 542, serine 544, asparagine 546, and glutamate 551 together coordinate Ca(2+). Basic and acidic residues predominate over residues 593–614; that stretch reads QGVDKNNRQPTKEDGLRFRNND. 5 disordered regions span residues 593–634, 891–923, 935–1175, 1201–1240, and 1259–1324; these read QGVD…SKKV, TYRNNARAPEEKDSYSSFQTPEERSAYVKEQAK, IKKK…VPVA, LVKSESSLIPPPPPLPTSITEGSGAPPVPIAPPLPQINSD, and TLAE…PPMP. A coiled-coil region spans residues 622–690; it reads RNRRKTIDQS…ENLKSQIQAL (69 aa). Over residues 911–923 the composition is skewed to basic and acidic residues; the sequence is PEERSAYVKEQAK. The span at 941–984 shows a compositional bias: low complexity; sequence SSQSSPNPPQLTQQQQPQQQQQQQQQQQQQQQQQPNYYQQPSQP. Over residues 998–1008 the composition is skewed to acidic residues; it reads DDDDEDEEDEE. A coiled-coil region spans residues 999 to 1036; sequence DDDEDEEDEEERRLLEQLEKLKLKKKQEKEARLAAKRQ. The segment covering 1009-1031 has biased composition (basic and acidic residues); it reads ERRLLEQLEKLKLKKKQEKEARL. Polar residues-rich tracts occupy residues 1061 to 1074 and 1082 to 1103; these read NPTGNQSQAGSHHQ and EATQQKPASGAGTPQLNNTPTG. A compositionally biased stretch (basic and acidic residues) spans 1122–1135; sequence KAAEQQRRVQRGLD. The segment covering 1136 to 1146 has biased composition (acidic residues); it reads DSDGWSDDDET. The segment covering 1156–1175 has biased composition (low complexity); the sequence is AVDVSSTAVPATSTASVPVA. 2 stretches are compositionally biased toward pro residues: residues 1226–1235 and 1304–1324; these read PPVPIAPPLP and AIPPAPPAPPVPVIPPPPPMP.

This sequence belongs to the PAN1 family. In terms of assembly, component of the PAN1 actin cytoskeleton-regulatory complex.

The protein resides in the cell membrane. Its subcellular location is the endosome membrane. The protein localises to the cytoplasm. It localises to the cytoskeleton. It is found in the actin patch. In terms of biological role, component of the PAN1 actin cytoskeleton-regulatory complex required for the internalization of endosomes during actin-coupled endocytosis. The complex links the site of endocytosis to the cell membrane-associated actin cytoskeleton. Mediates uptake of external molecules and vacuolar degradation of plasma membrane proteins. Plays a role in the proper organization of the cell membrane-associated actin cytoskeleton and promotes its destabilization. This chain is Actin cytoskeleton-regulatory complex protein PAN1 (PAN1), found in Kluyveromyces lactis (strain ATCC 8585 / CBS 2359 / DSM 70799 / NBRC 1267 / NRRL Y-1140 / WM37) (Yeast).